The primary structure comprises 963 residues: Ras-interacting protein 1 (963 aa).

Positions 1 to 10 (MLSGERKEGG) are enriched in basic and acidic residues. Disordered regions lie at residues 1–22 (MLSG…LPVG) and 35–118 (LGRR…AQRW). The span at 41 to 57 (SAASVKSSSSDTGSRSS) shows a compositional bias: low complexity. At R94 the chain carries Omega-N-methylarginine. Positions 96 to 113 (SGTGTTGSSGAGGPGTPG) are enriched in gly residues. Residues 144–259 (PPGVLKIFGA…RRFELRGREE (116 aa)) enclose the Ras-associating domain. S188, S280, and S292 each carry phosphoserine. The segment at 267–356 (AFGAADSEGT…LSMAPGAADA (90 aa)) is disordered. Positions 290–301 (AASGGAALASPG) are enriched in low complexity. Over residues 302-313 (PGTGSGAPAGSG) the composition is skewed to gly residues. Residues 320–333 (NLSLRRSVSELSLQ) show a composition bias toward low complexity. Phosphoserine is present on residues S326, S328, S331, and S419. Residues 600 to 897 (GRLARLIKEA…PPAEREAVDT (298 aa)) enclose the Dilute domain.

As to quaternary structure, interacts with Ras family members that have been activated by GTP binding. Interacts with HRAS, RAP1A, RAP2, RRAS, RAF1 and RRAS2. Interacts with MYH9 and ARHGAP29. As to expression, highly expressed in heart. Detected at lower levels in placenta and pancreas.

The protein resides in the cytoplasm. It localises to the perinuclear region. The protein localises to the golgi apparatus. Its subcellular location is the golgi stack. Functionally, required for the proper formation of vascular structures that develop via both vasculogenesis and angiogenesis. Acts as a critical and vascular-specific regulator of GTPase signaling, cell architecture, and adhesion, which is essential for endothelial cell morphogenesis and blood vessel tubulogenesis. Regulates the activity of Rho GTPases in part by recruiting ARHGAP29 and suppressing RhoA signaling and dampening ROCK and MYH9 activities in endothelial cells. May act as effector for Golgi-bound HRAS and other Ras-like proteins. May promote HRAS-mediated transformation. Negative regulator of amino acid starvation-induced autophagy. The sequence is that of Ras-interacting protein 1 (RASIP1) from Homo sapiens (Human).